A 289-amino-acid chain; its full sequence is MDQAGIIRDLLIWLEGHLDQPLSLDNVAAKAGYSKWHLQRMFKDVTGHAIGAYIRARRLSKSAVALRLTARPILDIALQYRFDSQQTFTRAFKKQFSQTPALYRRSSEWSAFGIRPPLRLGEFTVPEHQFVTLEDTPLLGVTQSYSCSLEQISDFRHEMRVQFWHDFLGHSPTIPPVLYGLNETRPSMEKDDEQEVFYTTALPQEQADGYVQSAHPVLLQGGEYVMFTYEGLGTGVQDFILTVYGTCMPMLNLTRRKGQDIERYYPSEDTKTGDRPINLRCEFLIPIRR.

Positions 8–106 (RDLLIWLEGH…SQTPALYRRS (99 aa)) constitute an HTH araC/xylS-type domain. 2 DNA-binding regions (H-T-H motif) span residues 25 to 46 (DNVA…KDVT) and 73 to 96 (ILDI…KKQF).

Transcriptional regulator. Represses transcription of genes belonging to the flagellar regulon, including flhD, flhB and fliC; probably thereby leading to repression of motility. Binds to regulatory regions of target genes, including the promoters of the flhDC operon and of P-type ATPase mgtA. Involved in post-transcriptional regulation of expression. Represses expression of the flhDC operon in a post-transcriptional manner. Binds to the right arm of the replication origin oriC of the chromosome. Rob binding may influence the formation of the nucleoprotein structure, required for oriC function in the initiation of replication. The sequence is that of Transcriptional regulator Rob from Salmonella typhimurium (strain LT2 / SGSC1412 / ATCC 700720).